A 703-amino-acid chain; its full sequence is DnaJ homolog subfamily C member 14 (703 aa).

Residues 1–11 (MAQKHPGERRL) are compositionally biased toward basic and acidic residues. The disordered stretch occupies residues 1–229 (MAQKHPGERR…GRHRLARKRS (229 aa)). Low complexity predominate over residues 17-28 (SGGTSLSTSGSS). Pro residues predominate over residues 75 to 84 (HGPPRGPGPP). The segment covering 91–102 (DESETGSEESGV) has biased composition (acidic residues). A compositionally biased stretch (polar residues) spans 121–133 (SFLSIPSACNCQG). Acidic residues predominate over residues 163–176 (GEDEELEEEYDDEE). The segment covering 193–202 (PLSRRQKHRF) has biased composition (basic residues). The segment covering 203–218 (LIKEDVRDSGRREPKA) has biased composition (basic and acidic residues). Over residues 219-228 (PGRHRLARKR) the composition is skewed to basic residues. The next 2 membrane-spanning stretches (helical) occupy residues 305–325 (MMFQ…IRIL) and 327–347 (VVGA…QLGW). The region spanning 444 to 508 (NPFHVLGVEA…ERRKEYEMKR (65 aa)) is the J domain. Disordered regions lie at residues 622–643 (FGSR…PPAD) and 659–703 (MSNG…PFQR). Residues 673-684 (GTTSTSRPNSSV) show a composition bias toward polar residues. Residues 691-703 (PKRRKKVRRPFQR) are compositionally biased toward basic residues.

As to quaternary structure, interacts with the FxxxFxxxF motif of DRD1 via its C-terminal domain.

It is found in the endoplasmic reticulum membrane. Functionally, regulates the export of target proteins, such as DRD1, from the endoplasmic reticulum to the cell surface. This is DnaJ homolog subfamily C member 14 (Dnajc14) from Mus musculus (Mouse).